Consider the following 119-residue polypeptide: MTSLFSESETEIVSTTYMFLTQDEMKGKAGTLNQPINDFLSLTKKFESSLKEEIKGQKGLIVKKIKKELESNSEKRKAALQMIKEEHTAKVDRYKMIIEDLRQQDVTLTYRKKKPVKDV.

Residues 63–104 (KKIKKELESNSEKRKAALQMIKEEHTAKVDRYKMIIEDLRQQ) are a coiled coil.

This is an uncharacterized protein from Bacillus subtilis (strain 168).